Here is a 593-residue protein sequence, read N- to C-terminus: V-type sodium ATPase catalytic subunit A (593 aa).

232 to 239 (GPFGAGKT) contributes to the ATP binding site.

Belongs to the ATPase alpha/beta chains family.

The enzyme catalyses 4 Na(+)(in) + ATP + H2O = 4 Na(+)(out) + ADP + phosphate + H(+). Functionally, involved in ATP-driven sodium extrusion. The sequence is that of V-type sodium ATPase catalytic subunit A (ntpA) from Enterococcus hirae (strain ATCC 9790 / DSM 20160 / JCM 8729 / LMG 6399 / NBRC 3181 / NCIMB 6459 / NCDO 1258 / NCTC 12367 / WDCM 00089 / R).